Consider the following 313-residue polypeptide: Protein-methionine-sulfoxide reductase catalytic subunit MsrP (313 aa).

Positions 1 to 46 form a signal peptide, tat-type signal; the sequence is MPSYRAPKIAAAEITPERFFLDRRTFIAAAAGSLALSVPKPSRAAA. Residues Asn-70, 73 to 74, Cys-127, Thr-162, Asn-212, Arg-217, and 228 to 230 contribute to the Mo-molybdopterin site; these read YE and GIK.

It belongs to the MsrP family. In terms of assembly, heterodimer of a catalytic subunit (MsrP) and a heme-binding subunit (MsrQ). Mo-molybdopterin serves as cofactor. Post-translationally, predicted to be exported by the Tat system. The position of the signal peptide cleavage has not been experimentally proven.

It localises to the periplasm. It carries out the reaction L-methionyl-[protein] + a quinone + H2O = L-methionyl-(S)-S-oxide-[protein] + a quinol. The enzyme catalyses L-methionyl-[protein] + a quinone + H2O = L-methionyl-(R)-S-oxide-[protein] + a quinol. Its function is as follows. Part of the MsrPQ system that repairs oxidized periplasmic proteins containing methionine sulfoxide residues (Met-O), using respiratory chain electrons. Thus protects these proteins from oxidative-stress damage caused by reactive species of oxygen and chlorine generated by the host defense mechanisms. MsrPQ is essential for the maintenance of envelope integrity under bleach stress, rescuing a wide series of structurally unrelated periplasmic proteins from methionine oxidation. The catalytic subunit MsrP is non-stereospecific, being able to reduce both (R-) and (S-) diastereoisomers of methionine sulfoxide. The chain is Protein-methionine-sulfoxide reductase catalytic subunit MsrP from Rhizobium meliloti (strain 1021) (Ensifer meliloti).